The sequence spans 318 residues: Beta-galactosidase small subunit (318 aa).

The protein belongs to the bacterial beta-galactosidase small subunit family. In terms of assembly, heterodimer of a large (LacL) and a small subunit (LacM).

The enzyme catalyses Hydrolysis of terminal non-reducing beta-D-galactose residues in beta-D-galactosides.. Component of a beta-galactosidase. This is Beta-galactosidase small subunit from Latilactobacillus sakei (Lactobacillus sakei).